Reading from the N-terminus, the 357-residue chain is Sorbitol dehydrogenase (357 aa).

Alanine 2 carries the post-translational modification N-acetylalanine. Cysteine 45 lines the Zn(2+) pocket. Position 51 (tyrosine 51) interacts with substrate. The Zn(2+) site is built by histidine 70, glutamate 71, and glutamate 156. Position 156 (glutamate 156) interacts with substrate. At serine 169 the chain carries Phosphoserine. NAD(+) is bound by residues isoleucine 184, aspartate 204, arginine 209, 273–275, and 297–299; these read VGM and VFR. 2 residues coordinate substrate: arginine 299 and tyrosine 300.

It belongs to the zinc-containing alcohol dehydrogenase family. As to quaternary structure, homotetramer; dimer of dimers. Zn(2+) is required as a cofactor. As to expression, expressed in liver and testis.

It is found in the mitochondrion membrane. It localises to the cell projection. The protein localises to the cilium. The protein resides in the flagellum. The catalysed reaction is keto-D-fructose + NADH + H(+) = D-sorbitol + NAD(+). It carries out the reaction xylitol + NAD(+) = D-xylulose + NADH + H(+). The enzyme catalyses L-iditol + NAD(+) = keto-L-sorbose + NADH + H(+). Its function is as follows. Polyol dehydrogenase that catalyzes the reversible NAD(+)-dependent oxidation of various sugar alcohols. Is active with D-sorbitol (D-glucitol) leading to the C2-oxidized product D-fructose. Is a key enzyme in the polyol pathway that interconverts glucose and fructose via sorbitol, which constitutes an important alternate route for glucose metabolism. May play a role in sperm motility by using sorbitol as an alternative energy source for sperm motility. The polypeptide is Sorbitol dehydrogenase (Sord) (Rattus norvegicus (Rat)).